The following is a 416-amino-acid chain: uncharacterized protein (416 aa).

The tract at residues 341 to 360 (EDREKGSQHTNNTHHHKRNL) is disordered.

This is an uncharacterized protein from Human cytomegalovirus (strain AD169) (HHV-5).